A 183-amino-acid polypeptide reads, in one-letter code: Adenylate kinase (183 aa).

12–17 (GAGKGT) serves as a coordination point for ATP. The NMP stretch occupies residues 32–61 (STGDLLRSEVSAGSALGQEAEAVMNRGELV). AMP contacts are provided by residues T33, R38, 59–61 (ELV), 86–89 (GFPR), and Q93. The segment at 127–133 (ARGRADD) is LID. R128 lines the ATP pocket. R130 and R141 together coordinate AMP. G169 is an ATP binding site.

Belongs to the adenylate kinase family. Monomer.

Its subcellular location is the cytoplasm. It catalyses the reaction AMP + ATP = 2 ADP. Its pathway is purine metabolism; AMP biosynthesis via salvage pathway; AMP from ADP: step 1/1. Its function is as follows. Catalyzes the reversible transfer of the terminal phosphate group between ATP and AMP. Plays an important role in cellular energy homeostasis and in adenine nucleotide metabolism. The sequence is that of Adenylate kinase from Synechococcus sp. (strain WH7803).